Here is a 193-residue protein sequence, read N- to C-terminus: D-alanyl-D-alanine dipeptidase (193 aa).

Residues His98 and Asp105 each contribute to the Zn(2+) site. Glu162 (proton donor/acceptor) is an active-site residue. His165 is a Zn(2+) binding site.

The protein belongs to the peptidase M15D family. Requires Zn(2+) as cofactor.

It localises to the cytoplasm. It catalyses the reaction D-alanyl-D-alanine + H2O = 2 D-alanine. Functionally, catalyzes hydrolysis of the D-alanyl-D-alanine dipeptide. May have a role in cell-wall turnover. The sequence is that of D-alanyl-D-alanine dipeptidase from Escherichia coli (strain K12).